Here is a 716-residue protein sequence, read N- to C-terminus: Amino-acid acetyltransferase, mitochondrial (716 aa).

A mitochondrion-targeting transit peptide spans 1-44 (MSLHTGWPRTVNSSFLKKHRSSLCTCQHTSSVLPRSFSTTPDRH). Residues 37–56 (FSTTPDRHVQQSADFSSTSR) are compositionally biased toward polar residues. 2 disordered regions span residues 37–58 (FSTTPDRHVQQSADFSSTSRSY) and 96–121 (KAQHPKSPDANKPEPEKSATAPTLPS). A compositionally biased stretch (basic and acidic residues) spans 101–112 (KSPDANKPEPEK). Positions 537 to 706 (SRPRLKLDDP…YEAVCRSIQP (170 aa)) constitute an N-acetyltransferase domain.

This sequence belongs to the acetyltransferase family.

Its subcellular location is the mitochondrion. It catalyses the reaction L-glutamate + acetyl-CoA = N-acetyl-L-glutamate + CoA + H(+). Its pathway is amino-acid biosynthesis; L-arginine biosynthesis; N(2)-acetyl-L-ornithine from L-glutamate: step 1/4. Its function is as follows. N-acetylglutamate synthase involved in arginine biosynthesis. This is Amino-acid acetyltransferase, mitochondrial (arg2) from Aspergillus fumigatus (strain CBS 144.89 / FGSC A1163 / CEA10) (Neosartorya fumigata).